A 346-amino-acid polypeptide reads, in one-letter code: NADH-ubiquinone oxidoreductase chain 2 (346 aa).

Transmembrane regions (helical) follow at residues 7–27 (AIIT…NHWI), 59–79 (YFLT…MNMW), 93–115 (ISCT…HFWF), 151–171 (TTLL…GGLN), 178–198 (IMAF…TLSP), 200–220 (ILLL…LMIN), 242–262 (TMML…GFAP), 275–294 (LSMF…YFYL), and 325–345 (LATI…LKAI).

The protein belongs to the complex I subunit 2 family.

The protein resides in the mitochondrion inner membrane. It catalyses the reaction a ubiquinone + NADH + 5 H(+)(in) = a ubiquinol + NAD(+) + 4 H(+)(out). Functionally, core subunit of the mitochondrial membrane respiratory chain NADH dehydrogenase (Complex I) that is believed to belong to the minimal assembly required for catalysis. Complex I functions in the transfer of electrons from NADH to the respiratory chain. The immediate electron acceptor for the enzyme is believed to be ubiquinone. This chain is NADH-ubiquinone oxidoreductase chain 2 (MT-ND2), found in Pelomedusa subrufa (African side-necked turtle).